Here is a 154-residue protein sequence, read N- to C-terminus: uncharacterized protein (154 aa).

2 helical membrane-spanning segments follow: residues 54-74 (FLITNLIFFFAAFVALLIYLL) and 81-101 (FAFVFIAAIIFIIFYNIFFLS).

Its subcellular location is the cell membrane. This is an uncharacterized protein from Mycoplasma genitalium (strain ATCC 33530 / DSM 19775 / NCTC 10195 / G37) (Mycoplasmoides genitalium).